Reading from the N-terminus, the 62-residue chain is Large ribosomal subunit protein bL28 (62 aa).

Residues 1 to 23 form a disordered region; that stretch reads MGKQCYVTGRKASTGNRRSHALN.

Belongs to the bacterial ribosomal protein bL28 family.

This Staphylococcus carnosus (strain TM300) protein is Large ribosomal subunit protein bL28.